A 404-amino-acid chain; its full sequence is Cysteine desulfurase IscS (404 aa).

Pyridoxal 5'-phosphate is bound by residues 75–76 (AT), Asn155, Gln183, and 203–205 (SAH). Lys206 bears the N6-(pyridoxal phosphate)lysine mark. Thr243 contributes to the pyridoxal 5'-phosphate binding site. Cys328 acts as the Cysteine persulfide intermediate in catalysis. Cys328 contacts [2Fe-2S] cluster.

This sequence belongs to the class-V pyridoxal-phosphate-dependent aminotransferase family. NifS/IscS subfamily. Homodimer. Forms a heterotetramer with IscU, interacts with other sulfur acceptors. Pyridoxal 5'-phosphate is required as a cofactor.

The protein localises to the cytoplasm. The catalysed reaction is (sulfur carrier)-H + L-cysteine = (sulfur carrier)-SH + L-alanine. The protein operates within cofactor biosynthesis; iron-sulfur cluster biosynthesis. Master enzyme that delivers sulfur to a number of partners involved in Fe-S cluster assembly, tRNA modification or cofactor biosynthesis. Catalyzes the removal of elemental sulfur atoms from cysteine to produce alanine. Functions as a sulfur delivery protein for Fe-S cluster synthesis onto IscU, an Fe-S scaffold assembly protein, as well as other S acceptor proteins. In Stutzerimonas stutzeri (strain A1501) (Pseudomonas stutzeri), this protein is Cysteine desulfurase IscS.